We begin with the raw amino-acid sequence, 213 residues long: Ribosomal RNA small subunit methyltransferase G (213 aa).

S-adenosyl-L-methionine is bound by residues G81, L86, V132 to E133, and R147.

Belongs to the methyltransferase superfamily. RNA methyltransferase RsmG family.

It is found in the cytoplasm. The catalysed reaction is guanosine(527) in 16S rRNA + S-adenosyl-L-methionine = N(7)-methylguanosine(527) in 16S rRNA + S-adenosyl-L-homocysteine. Specifically methylates the N7 position of guanine in position 527 of 16S rRNA. The sequence is that of Ribosomal RNA small subunit methyltransferase G from Mannheimia succiniciproducens (strain KCTC 0769BP / MBEL55E).